The chain runs to 362 residues: Ferredoxin--NADP reductase, leaf-type isozyme, chloroplastic (362 aa).

The segment at 1–20 is disordered; the sequence is MATAVSAAVSLPSSKSTSFS. Residues 1 to 62 constitute a chloroplast transit peptide; that stretch reads MATAVSAAVS…RAQVTTEAPA (62 aa). Low complexity predominate over residues 10 to 20; the sequence is SLPSSKSTSFS. Residues 83 to 205 form the FAD-binding FR-type domain; it reads KEPYVGRCLL…TGPVGKEMLM (123 aa). FAD is bound by residues 141 to 144, 162 to 164, tyrosine 168, 179 to 181, and threonine 220; these read RLYS, CVK, and VCS. NADP(+) is bound by residues serine 144 and lysine 164. NADP(+)-binding positions include threonine 220, 252–253, 282–283, lysine 292, 321–322, and glutamate 360; these read VP, SR, and GL.

It belongs to the ferredoxin--NADP reductase type 1 family. FAD serves as cofactor.

It localises to the plastid. Its subcellular location is the chloroplast stroma. The protein localises to the chloroplast thylakoid membrane. The catalysed reaction is 2 reduced [2Fe-2S]-[ferredoxin] + NADP(+) + H(+) = 2 oxidized [2Fe-2S]-[ferredoxin] + NADPH. It participates in energy metabolism; photosynthesis. Functionally, may play a key role in regulating the relative amounts of cyclic and non-cyclic electron flow to meet the demands of the plant for ATP and reducing power. The protein is Ferredoxin--NADP reductase, leaf-type isozyme, chloroplastic (PETH) of Nicotiana tabacum (Common tobacco).